The chain runs to 558 residues: Kelch-like protein 23 (558 aa).

A BTB domain is found at T36–E104. The region spanning C139–G240 is the BACK domain. Kelch repeat units lie at residues T274–P320, N321–G369, C370–D416, I418–N466, K467–G508, and I510–N557.

In Pongo abelii (Sumatran orangutan), this protein is Kelch-like protein 23 (KLHL23).